The chain runs to 161 residues: MPSFDVVCEANMIEVKNAIEQSNKEISTRFDFKGSDARVEHKENEITAYADDDFKLGQVKDVLLSKMAKRNVDVRFLDYGKIEKIGGDKVKQVIKIKKGVSGDLSKKIVRLVKDSKIKVQASIQGDAVRITGGKRDDLQSVIAMLRKDVTDTPLDFNNFRD.

It belongs to the YajQ family.

Nucleotide-binding protein. The polypeptide is Nucleotide-binding protein Bxeno_A3642 (Paraburkholderia xenovorans (strain LB400)).